Here is a 445-residue protein sequence, read N- to C-terminus: Phosphoglucosamine mutase (445 aa).

Ser-102 functions as the Phosphoserine intermediate in the catalytic mechanism. The Mg(2+) site is built by Ser-102, Asp-241, Asp-243, and Asp-245. Residue Ser-102 is modified to Phosphoserine.

The protein belongs to the phosphohexose mutase family. Requires Mg(2+) as cofactor. In terms of processing, activated by phosphorylation.

The catalysed reaction is alpha-D-glucosamine 1-phosphate = D-glucosamine 6-phosphate. Catalyzes the conversion of glucosamine-6-phosphate to glucosamine-1-phosphate. In Citrobacter koseri (strain ATCC BAA-895 / CDC 4225-83 / SGSC4696), this protein is Phosphoglucosamine mutase.